Consider the following 656-residue polypeptide: DNA ligase (656 aa).

NAD(+) is bound by residues 32–36 (DAVYD) and 81–82 (SL). The N6-AMP-lysine intermediate role is filled by K112. R133, E167, and K306 together coordinate NAD(+). 4 residues coordinate Zn(2+): C400, C403, C416, and C421. Residues 577-656 (ESSSVFSNKT…ELLKRLKEFD (80 aa)) form the BRCT domain.

It belongs to the NAD-dependent DNA ligase family. LigA subfamily. Mg(2+) serves as cofactor. Requires Mn(2+) as cofactor.

It carries out the reaction NAD(+) + (deoxyribonucleotide)n-3'-hydroxyl + 5'-phospho-(deoxyribonucleotide)m = (deoxyribonucleotide)n+m + AMP + beta-nicotinamide D-nucleotide.. In terms of biological role, DNA ligase that catalyzes the formation of phosphodiester linkages between 5'-phosphoryl and 3'-hydroxyl groups in double-stranded DNA using NAD as a coenzyme and as the energy source for the reaction. It is essential for DNA replication and repair of damaged DNA. The chain is DNA ligase from Helicobacter pylori (strain Shi470).